A 355-amino-acid chain; its full sequence is N5-carboxyaminoimidazole ribonucleotide synthase (355 aa).

ATP is bound by residues Arg-80, Lys-120, Gly-125–Gln-131, Glu-153–Ile-156, Glu-161, His-184, and Asn-237–Glu-238. The ATP-grasp domain maps to Lys-84–Thr-267.

Belongs to the PurK/PurT family. In terms of assembly, homodimer.

It catalyses the reaction 5-amino-1-(5-phospho-beta-D-ribosyl)imidazole + hydrogencarbonate + ATP = 5-carboxyamino-1-(5-phospho-D-ribosyl)imidazole + ADP + phosphate + 2 H(+). It participates in purine metabolism; IMP biosynthesis via de novo pathway; 5-amino-1-(5-phospho-D-ribosyl)imidazole-4-carboxylate from 5-amino-1-(5-phospho-D-ribosyl)imidazole (N5-CAIR route): step 1/2. Its function is as follows. Catalyzes the ATP-dependent conversion of 5-aminoimidazole ribonucleotide (AIR) and HCO(3)(-) to N5-carboxyaminoimidazole ribonucleotide (N5-CAIR). In Escherichia coli (strain K12), this protein is N5-carboxyaminoimidazole ribonucleotide synthase.